The following is a 187-amino-acid chain: uncharacterized protein (187 aa).

A signal peptide spans 1–28; that stretch reads MRLHRTNNSRRCTILLILALKIFDFVDT. N-linked (GlcNAc...) asparagine glycosylation is found at N58, N70, N156, and N168.

The protein resides in the secreted. This is an uncharacterized protein from Caenorhabditis elegans.